A 120-amino-acid polypeptide reads, in one-letter code: Large ribosomal subunit protein uL18 (120 aa).

Residues 1 to 29 (MITKPNKNAGRKKRHAHVRRTLSGTPQRP) are disordered. Over residues 9–20 (AGRKKRHAHVRR) the composition is skewed to basic residues.

It belongs to the universal ribosomal protein uL18 family. Part of the 50S ribosomal subunit; part of the 5S rRNA/L5/L18/L25 subcomplex. Contacts the 5S and 23S rRNAs.

This is one of the proteins that bind and probably mediate the attachment of the 5S RNA into the large ribosomal subunit, where it forms part of the central protuberance. This Shouchella clausii (strain KSM-K16) (Alkalihalobacillus clausii) protein is Large ribosomal subunit protein uL18.